The primary structure comprises 328 residues: Carbonic anhydrase-related protein 11 (328 aa).

Positions 1–23 are cleaved as a signal peptide; it reads MGAAARLSAPRALVLWAALGAAA. In terms of domain architecture, Alpha-carbonic anhydrase spans 33-303; that stretch reads DWWSYKDNLQ…LAHRALRGNR (271 aa). Residues Asn118, Asn170, and Asn260 are each glycosylated (N-linked (GlcNAc...) asparagine). Positions 299–328 are disordered; it reads LRGNRDPRHPERRCRGPNYRLHVDGVPHGR. Basic and acidic residues predominate over residues 319 to 328; sequence LHVDGVPHGR.

This sequence belongs to the alpha-carbonic anhydrase family. As to expression, expressed abundantly in the brain with moderate expression also present in spinal cord and thyroid.

The protein resides in the secreted. Does not have a catalytic activity. This chain is Carbonic anhydrase-related protein 11 (CA11), found in Homo sapiens (Human).